The sequence spans 1482 residues: Cystic fibrosis transmembrane conductance regulator (1482 aa).

At 1-77 the chain is on the cytoplasmic side; it reads MQRSPLEKAS…KLINALRRCF (77 aa). Residues 78–98 form a helical membrane-spanning segment; that stretch reads FWRFMFYGIILYLGEVTKAVQ. Residues 81–365 enclose the ABC transmembrane type-1 1 domain; it reads FMFYGIILYL…WAVQTWYDSL (285 aa). At 99–122 the chain is on the extracellular side; it reads PLLLGRIIASYDPDNKAERSIAIY. Residues 123 to 146 traverse the membrane as a helical segment; the sequence is LGVGLCLLFIVRTLLLHPAIFGPH. At 147–195 the chain is on the cytoplasmic side; it reads HIGMQMRIAMFSLIYKKTLKLSSRVLDKISIGQLVSLLSNNLNKFDEGL. The helical transmembrane segment at 196-216 threads the bilayer; it reads ALAHFVWIAPLQVTLLMGLLW. Residues 217-222 lie on the Extracellular side of the membrane; the sequence is ELLQAS. A helical membrane pass occupies residues 223–243; that stretch reads AFCGLAFLVVLALFQAGLGKM. The Cytoplasmic portion of the chain corresponds to 244–298; sequence MMKYRDQRAGKINERLVITSEMIENIQSVKAYCWEEAMEKMIENLRQTELKLTRK. The helical transmembrane segment at 299 to 319 threads the bilayer; it reads AAYVRYFNSSAFFFSGLFVVF. Topologically, residues 320–339 are extracellular; it reads LSVLPYALLKGIMLRKIFTT. A helical transmembrane segment spans residues 340-358; that stretch reads ISFCIVLRMAVTRQFPWAV. Residues 359-859 are Cytoplasmic-facing; sequence QTWYDSLGAI…YLRYVTVHKS (501 aa). Residues Trp-401, Ser-434, 458 to 465, and Gln-493 each bind ATP; that span reads GSTGAGKT. In terms of domain architecture, ABC transporter 1 spans 423-646; sequence NGDNSLFFSN…RPDFSSKLMG (224 aa). The S-palmitoyl cysteine moiety is linked to residue Cys-524. A phosphoserine mark is found at Ser-549 and Ser-660. Positions 654-832 are disordered R region; the sequence is TAERRNSIIT…EEINEEDLRE (179 aa). The residue at position 670 (Ser-670) is a Phosphoserine; by PKA. Ser-686 carries the phosphoserine modification. Lys-688 participates in a covalent cross-link: Glycyl lysine isopeptide (Lys-Gly) (interchain with G-Cter in ubiquitin). Ser-700 and Ser-712 each carry phosphoserine. At Thr-717 the chain carries Phosphothreonine. Ser-737, Ser-768, Ser-791, Ser-796, and Ser-814 each carry phosphoserine. A helical transmembrane segment spans residues 860–880; that stretch reads LIFVLIWCLVVFLAEVAACLV. The region spanning 860-1156 is the ABC transmembrane type-1 2 domain; that stretch reads LIFVLIWCLV…AVNSSIDVDS (297 aa). At 881–919 the chain is on the extracellular side; that stretch reads VLCLLKKTSPQDKGNSTKGANNSYAVIITSTSAYYVFYI. N-linked (GlcNAc...) asparagine glycosylation is found at Asn-895 and Asn-901. Residues 920–940 traverse the membrane as a discontinuously helical segment; the sequence is YVGVADGLLALGLFRGLPLVH. Residues 941–991 are Cytoplasmic-facing; the sequence is TLITVSKILHRKMLHSVLQAPMSTLNTLKAGGILNRFSKDIAVLDDLLPLT. A helical membrane pass occupies residues 992 to 1012; the sequence is IFDFIQLLLIVIGAVAVVSVL. The Extracellular segment spans residues 1013–1014; it reads KP. A helical membrane pass occupies residues 1015–1035; the sequence is YIFLATVPVIVAFILLRAYFL. The Cytoplasmic portion of the chain corresponds to 1036 to 1096; that stretch reads HTSQQLKQLE…TANWFLYLST (61 aa). The chain crosses the membrane as a helical span at residues 1097–1117; sequence LRWFQMRIEMIFVIFFIAVTF. Topologically, residues 1118-1131 are extracellular; sequence ISILTTGEGEGTVG. The chain crosses the membrane as a helical span at residues 1132 to 1152; it reads IILTLAMNIMSTLQWAVNSSI. Over 1153-1482 the chain is Cytoplasmic; the sequence is DVDSLMRSVS…TEEEVQETRL (330 aa). The region spanning 1212-1445 is the ABC transporter 2 domain; that stretch reads MTVKDLTAKY…KSLFRQAISP (234 aa). ATP is bound by residues Tyr-1221 and 1246 to 1253; that span reads GRTGSGKS. Residues 1388-1482 are interaction with GORASP2; it reads RTLKQAFADC…TEEEVQETRL (95 aa). Residue Cys-1397 is the site of S-palmitoyl cysteine attachment. The span at 1454-1464 shows a compositional bias: basic residues; sequence HRNSSKQRSRS. The segment at 1454-1482 is disordered; sequence HRNSSKQRSRSKIAALKEETEEEVQETRL. Ser-1458 is subject to Phosphoserine. Residues 1472-1482 show a composition bias toward acidic residues; that stretch reads ETEEEVQETRL. The PDZ-binding signature appears at 1480–1482; sequence TRL.

This sequence belongs to the ABC transporter superfamily. ABCC family. CFTR transporter (TC 3.A.1.202) subfamily. As to quaternary structure, monomer; does not require oligomerization for channel activity. May form oligomers in the membrane. Interacts with SLC26A3, SLC26A6 and NHERF1. Interacts with SHANK2. Interacts with MYO6. Interacts (via C-terminus) with GOPC (via PDZ domain); this promotes CFTR internalization and thereby decreases channel activity. Interacts with SLC4A7 through NHERF1. Found in a complex with MYO5B and RAB11A. Interacts with ANO1. Interacts with SLC26A8. Interacts with AHCYL1; the interaction increases CFTR activity. Interacts with CSE1L. The core-glycosylated form interacts with GORASP2 (via PDZ GRASP-type 1 domain) in respone to ER stress. Interacts with MARCHF2; the interaction leads to CFTR ubiqtuitination and degradation. Interacts with ADGRG2. N-glycosylated. Post-translationally, phosphorylated; cAMP treatment promotes phosphorylation and activates the channel. Dephosphorylation decreases the ATPase activity (in vitro). Phosphorylation at PKA sites activates the channel. Phosphorylation at PKC sites enhances the response to phosphorylation by PKA. Phosphorylated by AMPK; this inhibits channel activity. In terms of processing, ubiquitinated, leading to its degradation in the lysosome. Deubiquitination by USP10 in early endosomes enhances its endocytic recycling to the cell membrane. Ubiquitinated by RNF185 during ER stress. Ubiquitinated by MARCHF2.

It localises to the apical cell membrane. The protein resides in the early endosome membrane. Its subcellular location is the cell membrane. The protein localises to the recycling endosome membrane. It is found in the endoplasmic reticulum membrane. It localises to the nucleus. It carries out the reaction ATP + H2O + closed Cl(-) channel = ADP + phosphate + open Cl(-) channel.. The enzyme catalyses chloride(in) = chloride(out). The catalysed reaction is hydrogencarbonate(in) = hydrogencarbonate(out). It catalyses the reaction ATP + H2O = ADP + phosphate + H(+). In terms of biological role, epithelial ion channel that plays an important role in the regulation of epithelial ion and water transport and fluid homeostasis. Mediates the transport of chloride ions across the cell membrane. Possesses an intrinsic ATPase activity and utilizes ATP to gate its channel; the passive flow of anions through the channel is gated by cycles of ATP binding and hydrolysis by the ATP-binding domains. The ion channel is also permeable to HCO(3)(-); selectivity depends on the extracellular chloride concentration. Exerts its function also by modulating the activity of other ion channels and transporters. Contributes to the regulation of the pH and the ion content of the epithelial fluid layer. Modulates the activity of the epithelial sodium channel (ENaC) complex, in part by regulating the cell surface expression of the ENaC complex. May regulate bicarbonate secretion and salvage in epithelial cells by regulating the transporter SLC4A7. Can inhibit the chloride channel activity of ANO1. Plays a role in the chloride and bicarbonate homeostasis during sperm epididymal maturation and capacitation. The chain is Cystic fibrosis transmembrane conductance regulator from Sus scrofa (Pig).